The chain runs to 402 residues: Imidazolonepropionase (402 aa).

Fe(3+) is bound by residues His66 and His68. Residues His66 and His68 each contribute to the Zn(2+) site. The 4-imidazolone-5-propanoate site is built by Arg75, Tyr138, and His171. Tyr138 is a binding site for N-formimidoyl-L-glutamate. Fe(3+) is bound at residue His236. His236 contributes to the Zn(2+) binding site. A 4-imidazolone-5-propanoate-binding site is contributed by Gln239. Asp311 contacts Fe(3+). Zn(2+) is bound at residue Asp311. N-formimidoyl-L-glutamate-binding residues include Asn313 and Gly315. 4-imidazolone-5-propanoate is bound at residue Thr316.

This sequence belongs to the metallo-dependent hydrolases superfamily. HutI family. Zn(2+) is required as a cofactor. Fe(3+) serves as cofactor.

It is found in the cytoplasm. It carries out the reaction 4-imidazolone-5-propanoate + H2O = N-formimidoyl-L-glutamate. The protein operates within amino-acid degradation; L-histidine degradation into L-glutamate; N-formimidoyl-L-glutamate from L-histidine: step 3/3. Its function is as follows. Catalyzes the hydrolytic cleavage of the carbon-nitrogen bond in imidazolone-5-propanoate to yield N-formimidoyl-L-glutamate. It is the third step in the universal histidine degradation pathway. This is Imidazolonepropionase from Pseudomonas aeruginosa (strain UCBPP-PA14).